The primary structure comprises 39 residues: Cytochrome b559 subunit beta (39 aa).

Residues 14 to 30 (WLTVHGLAVPTVSFLGS) form a helical membrane-spanning segment. Heme is bound at residue His18.

Belongs to the PsbE/PsbF family. As to quaternary structure, heterodimer of an alpha subunit and a beta subunit. PSII is composed of 1 copy each of membrane proteins PsbA, PsbB, PsbC, PsbD, PsbE, PsbF, PsbH, PsbI, PsbJ, PsbK, PsbL, PsbM, PsbT, PsbX, PsbY, PsbZ, Psb30/Ycf12, at least 3 peripheral proteins of the oxygen-evolving complex and a large number of cofactors. It forms dimeric complexes. Heme b is required as a cofactor.

The protein localises to the plastid. It localises to the chloroplast thylakoid membrane. Its function is as follows. This b-type cytochrome is tightly associated with the reaction center of photosystem II (PSII). PSII is a light-driven water:plastoquinone oxidoreductase that uses light energy to abstract electrons from H(2)O, generating O(2) and a proton gradient subsequently used for ATP formation. It consists of a core antenna complex that captures photons, and an electron transfer chain that converts photonic excitation into a charge separation. This chain is Cytochrome b559 subunit beta, found in Cucumis sativus (Cucumber).